The primary structure comprises 343 residues: MPRGQKSKLRAREKRHQARCENQDLGATQATVAEGESPSPAYLLFGDRPQNLPAAETPSIPEALQGAPSTTNAIAPVSCSSNEGASSQDEKSLGSSREAEGWKEDPLNKKVVSLVHFLLQKYETKEPITKGDMIKFVIRKDKCHFNEILKRASEHMELALGVDLKEVDPIRHYYAFFSKLDLTYDETTSDEEKIPKTGLLMIALGVIFLNGNRAPEEAVWEIMNMMGVYADRKHFLYGDPRKVMTKDLVQLKYLEYQQVPNSDPPRYEFLWGPRAHAETSKMKVLEFVAKIHDTVPSAFPSCYEEALRDEEQRTQARAAARAHTAAMANARSRTTSSSFSHAK.

Basic residues predominate over residues methionine 1 to glutamine 17. Positions methionine 1 to tryptophan 102 are disordered. A compositionally biased stretch (polar residues) spans alanine 67–serine 87. Residues glutamine 88 to tryptophan 102 show a composition bias toward basic and acidic residues. The segment at glutamate 100–lysine 343 is interaction with LNX1. One can recognise an MAGE domain in the interval leucine 107–alanine 306. A disordered region spans residues arginine 313–lysine 343. A compositionally biased stretch (low complexity) spans alanine 316–arginine 333. Residues threonine 334–lysine 343 show a composition bias toward polar residues.

In terms of assembly, interacts with LNX1.

The protein localises to the cytoplasm. May enhance ubiquitin ligase activity of RING-type zinc finger-containing E3 ubiquitin-protein ligases. Proposed to act through recruitment and/or stabilization of the Ubl-conjugating enzyme (E2) at the E3:substrate complex. In Homo sapiens (Human), this protein is Melanoma-associated antigen B18 (MAGEB18).